The sequence spans 333 residues: Anthranilate phosphoribosyltransferase (333 aa).

5-phospho-alpha-D-ribose 1-diphosphate contacts are provided by residues G81, 84 to 85 (GD), T89, 91 to 94 (NIST), 109 to 117 (KHGNRSVSS), and A121. G81 provides a ligand contact to anthranilate. S93 serves as a coordination point for Mg(2+). Residue N112 participates in anthranilate binding. Residue R167 coordinates anthranilate. Mg(2+) is bound by residues D225 and E226.

The protein belongs to the anthranilate phosphoribosyltransferase family. In terms of assembly, homodimer. Requires Mg(2+) as cofactor.

The catalysed reaction is N-(5-phospho-beta-D-ribosyl)anthranilate + diphosphate = 5-phospho-alpha-D-ribose 1-diphosphate + anthranilate. Its pathway is amino-acid biosynthesis; L-tryptophan biosynthesis; L-tryptophan from chorismate: step 2/5. Catalyzes the transfer of the phosphoribosyl group of 5-phosphorylribose-1-pyrophosphate (PRPP) to anthranilate to yield N-(5'-phosphoribosyl)-anthranilate (PRA). The sequence is that of Anthranilate phosphoribosyltransferase from Pasteurella multocida (strain Pm70).